Reading from the N-terminus, the 755-residue chain is PWWP domain-containing protein 2A (755 aa).

The segment covering 1–15 (MAAVAAEAAATAASP) has biased composition (low complexity). The interval 1 to 153 (MAAVAAEAAA…VPPAGGDSTV (153 aa)) is disordered. Positions 64-76 (DEPPLPPPPPPPG) are enriched in pro residues. Ser-81, Ser-102, Ser-116, and Ser-119 each carry phosphoserine. Positions 112–126 (ELPPSPASPPEQPPA) are enriched in pro residues. The tract at residues 148 to 373 (GGDSTVSQLI…KLKTDHKVDG (226 aa)) is interaction with HDAC1 and MTA1. Lys-208 participates in a covalent cross-link: Glycyl lysine isopeptide (Lys-Gly) (interchain with G-Cter in SUMO2). Disordered stretches follow at residues 282 to 301 (YNQS…KRKM), 334 to 384 (KEIR…KRNA), 400 to 562 (KVSA…GSKN), and 578 to 626 (SSAS…SKEE). Residues 292–301 (RKIKRPKRKM) are compositionally biased toward basic residues. Composition is skewed to basic and acidic residues over residues 346-356 (SKYEDKKRRNE) and 368-381 (DHKV…ESQK). Over residues 403–421 (AQANTSKAQLSTKKVLQSK) the composition is skewed to polar residues. Over residues 422–444 (NMDHAKAREVLKIAKEKAQKKQN) the composition is skewed to basic and acidic residues. Positions 423 to 574 (MDHAKAREVL…SVYMTLNQKK (152 aa)) are interaction with the H2A.Z/H2AZ1. Residues 508 to 527 (SRCTSTRSAGEAPSENQSPS) are compositionally biased toward polar residues. Low complexity predominate over residues 593–603 (SSNSECSSSES). The PWWP domain maps to 655–715 (VGDIVWAKIY…LSQLSPFLEN (61 aa)).

As to quaternary structure, component of a MTA1-specific subcomplex of the NuRD complex (M1HR), composed of PWWP2A, MTA1/2, HDAC1/2, and RBBP4/7 but does not contain CHD4 and MBD3. Interacts with MTA1; the interaction mediates the association of PWWP2A with the M1HR complex. Interacts with H2A.Z/H2AZ1. Interacts (via PWWP domain) with histone H3 trimethylated at 'Lys-36' (H3K36me3). Does not interact with CHD4 and MBD3. Interacts with MTA1 and with HDAC1 in a MTA1-dependent manner. Does not interact with CHD4 and MBD3.

Its subcellular location is the nucleus. Its function is as follows. Chromatin-binding protein that acts as an adapter between distinct nucleosome components (H3K36me3 or H2A.Z) and chromatin-modifying complexes, contributing to the regulation of the levels of histone acetylation at actively transcribed genes. Competes with CHD4 and MBD3 for interaction with MTA1 to form a NuRD subcomplex, preventing the formation of full NuRD complex (containing CHD4 and MBD3), leading to recruitment of HDACs to gene promoters resulting in turn in the deacetylation of nearby H3K27 and H2A.Z. Plays a role in facilitating transcriptional elongation and repression of spurious transcription initiation through regulation of histone acetylation. Essential for proper mitosis progression. The protein is PWWP domain-containing protein 2A (PWWP2A) of Homo sapiens (Human).